A 403-amino-acid chain; its full sequence is Vacuole membrane protein 1 homolog (403 aa).

Positions Ile-7 to Lys-33 form a coiled coil. 8 consecutive transmembrane segments (helical) span residues Phe-65–Gly-85, Ile-102–Phe-122, Ala-150–Leu-170, Trp-175–Ala-195, Leu-240–Phe-260, Ala-263–Ile-283, Ala-294–Glu-314, and Val-348–Val-368.

Belongs to the VMP1 family.

The protein resides in the membrane. It is found in the endoplasmic reticulum. The enzyme catalyses a 1,2-diacyl-sn-glycero-3-phospho-L-serine(in) = a 1,2-diacyl-sn-glycero-3-phospho-L-serine(out). It catalyses the reaction cholesterol(in) = cholesterol(out). It carries out the reaction a 1,2-diacyl-sn-glycero-3-phosphocholine(in) = a 1,2-diacyl-sn-glycero-3-phosphocholine(out). The catalysed reaction is a 1,2-diacyl-sn-glycero-3-phosphoethanolamine(in) = a 1,2-diacyl-sn-glycero-3-phosphoethanolamine(out). In terms of biological role, phospholipid scramblase involved in lipid homeostasis and membrane dynamics processes. Required for autophagosome formation: participates in early stages of autophagosome biogenesis at the endoplasmic reticulum (ER) membrane by reequilibrating the leaflets of the ER as lipids are extracted. In addition to autophagy, involved in other processes in which phospholipid scramblase activity is required. The chain is Vacuole membrane protein 1 homolog from Dictyostelium discoideum (Social amoeba).